The chain runs to 381 residues: uncharacterized protein (381 aa).

2 consecutive transmembrane segments (helical) span residues 22–42 (GVLL…YLTA) and 246–266 (LIPE…LLVA).

The protein localises to the cell membrane. This is an uncharacterized protein from Mycobacterium tuberculosis (strain ATCC 25618 / H37Rv).